The primary structure comprises 249 residues: uncharacterized protein (249 aa).

A helical membrane pass occupies residues 3–23 (WYWIGLLIVVVLFLLSAVRIV).

The protein belongs to the band 7/mec-2 family.

The protein localises to the membrane. This is an uncharacterized protein from Archaeoglobus fulgidus (strain ATCC 49558 / DSM 4304 / JCM 9628 / NBRC 100126 / VC-16).